The primary structure comprises 58 residues: Large ribosomal subunit protein bL32 (58 aa).

It belongs to the bacterial ribosomal protein bL32 family.

The chain is Large ribosomal subunit protein bL32 from Anaplasma phagocytophilum (strain HZ).